A 188-amino-acid polypeptide reads, in one-letter code: Peptidyl-tRNA hydrolase (188 aa).

F14 provides a ligand contact to tRNA. The active-site Proton acceptor is H19. 3 residues coordinate tRNA: Y64, N66, and N112.

Belongs to the PTH family. In terms of assembly, monomer.

The protein resides in the cytoplasm. It carries out the reaction an N-acyl-L-alpha-aminoacyl-tRNA + H2O = an N-acyl-L-amino acid + a tRNA + H(+). Its function is as follows. Hydrolyzes ribosome-free peptidyl-tRNAs (with 1 or more amino acids incorporated), which drop off the ribosome during protein synthesis, or as a result of ribosome stalling. In terms of biological role, catalyzes the release of premature peptidyl moieties from peptidyl-tRNA molecules trapped in stalled 50S ribosomal subunits, and thus maintains levels of free tRNAs and 50S ribosomes. This chain is Peptidyl-tRNA hydrolase, found in Onion yellows phytoplasma (strain OY-M).